A 454-amino-acid chain; its full sequence is Exodeoxyribonuclease 7 large subunit (454 aa).

Positions 337-352 (ANQRQQRASQRLRQQN) are enriched in low complexity. Positions 337 to 359 (ANQRQQRASQRLRQQNPQPRIHR) are disordered.

The protein belongs to the XseA family. In terms of assembly, heterooligomer composed of large and small subunits.

The protein resides in the cytoplasm. It catalyses the reaction Exonucleolytic cleavage in either 5'- to 3'- or 3'- to 5'-direction to yield nucleoside 5'-phosphates.. In terms of biological role, bidirectionally degrades single-stranded DNA into large acid-insoluble oligonucleotides, which are then degraded further into small acid-soluble oligonucleotides. The chain is Exodeoxyribonuclease 7 large subunit from Salmonella arizonae (strain ATCC BAA-731 / CDC346-86 / RSK2980).